Consider the following 211-residue polypeptide: Uracil phosphoribosyltransferase (211 aa).

5-phospho-alpha-D-ribose 1-diphosphate is bound by residues arginine 78, arginine 103, and 130–138 (DPMLATGGT). Residues isoleucine 195 and 200–202 (GDA) contribute to the uracil site. Aspartate 201 serves as a coordination point for 5-phospho-alpha-D-ribose 1-diphosphate.

The protein belongs to the UPRTase family. Requires Mg(2+) as cofactor.

It catalyses the reaction UMP + diphosphate = 5-phospho-alpha-D-ribose 1-diphosphate + uracil. Its pathway is pyrimidine metabolism; UMP biosynthesis via salvage pathway; UMP from uracil: step 1/1. Allosterically activated by GTP. Its function is as follows. Catalyzes the conversion of uracil and 5-phospho-alpha-D-ribose 1-diphosphate (PRPP) to UMP and diphosphate. This chain is Uracil phosphoribosyltransferase, found in Streptomyces coelicolor (strain ATCC BAA-471 / A3(2) / M145).